The following is a 194-amino-acid chain: MSDPFGEENVEITEEFVEGDINENDLIDGNVEYVDGNGISFETTTFDNSNNNNNNNNHNNNSYNSGFDGDLSSVDGDMKPKETAPAMREYLEKHEKEMQEKKKKSEEKRQKKIAEAKQSLDNFYSEREAKKKTALKNNRDHNKSLETDSTSGNTTHTWESVVSMIDLQAKPNPANKDTSRMREILIRLKNQPIV.

Positions 44–156 (TTFDNSNNNN…TDSTSGNTTH (113 aa)) are disordered. Residues 48–65 (NSNNNNNNNNHNNNSYNS) are compositionally biased toward low complexity. Basic and acidic residues-rich tracts occupy residues 89–115 (EYLE…KIAE) and 124–146 (YSER…KSLE). Residues 124–194 (YSEREAKKKT…LIRLKNQPIV (71 aa)) form a required for binding clathrin heavy chain, localization to punctae, and for cytokinesis and fruiting body development region. Residues 147-156 (TDSTSGNTTH) show a composition bias toward polar residues.

This sequence belongs to the clathrin light chain family. As to quaternary structure, clathrin coats are formed from molecules containing 3 heavy chains and 3 light chains.

It is found in the cytoplasmic vesicle membrane. Its subcellular location is the membrane. It localises to the coated pit. In terms of biological role, clathrin is the major protein of the polyhedral coat of coated pits and vesicles. This Dictyostelium discoideum (Social amoeba) protein is Clathrin light chain (clc).